A 246-amino-acid chain; its full sequence is UDP-N-acetyl-D-mannosaminuronic acid transferase (246 aa).

It belongs to the glycosyltransferase 26 family.

The enzyme catalyses UDP-N-acetyl-alpha-D-mannosaminouronate + N-acetyl-alpha-D-glucosaminyl-di-trans,octa-cis-undecaprenyl diphosphate = beta-D-ManNAcA-(1-&gt;4)-alpha-D-GlcNAc-di-trans,octa-cis-undecaprenyl diphosphate + UDP + H(+). It functions in the pathway bacterial outer membrane biogenesis; enterobacterial common antigen biosynthesis. Catalyzes the synthesis of Und-PP-GlcNAc-ManNAcA (Lipid II), the second lipid-linked intermediate involved in enterobacterial common antigen (ECA) synthesis. In Salmonella dublin (strain CT_02021853), this protein is UDP-N-acetyl-D-mannosaminuronic acid transferase.